The primary structure comprises 304 residues: Dihydroorotate dehydrogenase B (NAD(+)), catalytic subunit (304 aa).

Residues Ser-21 and 45–46 contribute to the FMN site; that span reads KA. Residues Lys-45 and 69–73 contribute to the substrate site; that span reads NAIGL. Residues Asn-99 and Asn-127 each contribute to the FMN site. Residue Asn-127 participates in substrate binding. Cys-130 serves as the catalytic Nucleophile. FMN-binding residues include Lys-165 and Ile-191. Substrate is bound at residue 192–193; it reads NT. FMN is bound by residues Gly-217, 243–244, and 265–266; these read GG and GT.

This sequence belongs to the dihydroorotate dehydrogenase family. Type 1 subfamily. In terms of assembly, heterotetramer of 2 PyrK and 2 PyrD type B subunits. FMN is required as a cofactor.

The protein resides in the cytoplasm. The catalysed reaction is (S)-dihydroorotate + NAD(+) = orotate + NADH + H(+). It functions in the pathway pyrimidine metabolism; UMP biosynthesis via de novo pathway; orotate from (S)-dihydroorotate (NAD(+) route): step 1/1. Its function is as follows. Catalyzes the conversion of dihydroorotate to orotate with NAD(+) as electron acceptor. In Listeria welshimeri serovar 6b (strain ATCC 35897 / DSM 20650 / CCUG 15529 / CIP 8149 / NCTC 11857 / SLCC 5334 / V8), this protein is Dihydroorotate dehydrogenase B (NAD(+)), catalytic subunit (pyrD).